The primary structure comprises 528 residues: Protein spinster homolog 1 (528 aa).

Residues 1–49 (MAGSDTAPFLSQADDPDDGPVPGTPGLPGSTGNPKSEEPEVPDQEGLQR) are disordered. Ala2 carries the post-translational modification N-acetylalanine. The next 12 helical transmembrane spans lie at 50 to 70 (ITGL…YINL), 98 to 118 (GLIQ…FGYL), 127 to 147 (LMCG…FIPG), 160 to 180 (VGVG…DLFV), 187 to 207 (MLSI…IAGS), 218 to 238 (WALR…FLVV), 278 to 298 (LGFT…PAFL), 323 to 343 (LIFG…GVEI), 357 to 377 (LVCA…LACA), 381 to 401 (IVAT…NWAI), 421 to 441 (FQIV…IGLI), and 465 to 485 (MLCA…AIFI). Ser518 is modified (phosphoserine).

It belongs to the major facilitator superfamily. Spinster (TC 2.A.1.49) family. Interacts with BCL2 and BCL2L1.

The protein resides in the lysosome membrane. It localises to the mitochondrion inner membrane. It carries out the reaction a 1-acyl-sn-glycero-3-phosphocholine(out) + H(+)(out) = a 1-acyl-sn-glycero-3-phosphocholine(in) + H(+)(in). The enzyme catalyses 1-hexadecanoyl-sn-glycero-3-phosphocholine(out) + H(+)(out) = 1-hexadecanoyl-sn-glycero-3-phosphocholine(in) + H(+)(in). The catalysed reaction is 1-(9Z-octadecenoyl)-sn-glycero-3-phosphocholine(out) + H(+)(out) = 1-(9Z-octadecenoyl)-sn-glycero-3-phosphocholine(in) + H(+)(in). It catalyses the reaction 1-(5Z,8Z,11Z,14Z-eicosatetraenoyl)-sn-glycero-3-phosphocholine(out) + H(+)(out) = 1-(5Z,8Z,11Z,14Z-eicosatetraenoyl)-sn-glycero-3-phosphocholine(in) + H(+)(in). It carries out the reaction 1-(4Z,7Z,10Z,13Z,16Z,19Z-docosahexaenoyl)-sn-glycero-3-phosphocholine(out) + H(+)(out) = 1-(4Z,7Z,10Z,13Z,16Z,19Z-docosahexaenoyl)-sn-glycero-3-phosphocholine(in) + H(+)(in). The enzyme catalyses a 1-acyl-sn-glycero-3-phosphoethanolamine(out) + H(+)(out) = a 1-acyl-sn-glycero-3-phosphoethanolamine(in) + H(+)(in). The catalysed reaction is 1-(9Z-octadecenoyl)-sn-glycero-3-phosphoethanolamine(out) + H(+)(out) = 1-(9Z-octadecenoyl)-sn-glycero-3-phosphoethanolamine(in) + H(+)(in). It catalyses the reaction 1-acyl-sn-glycero-3-phospho-(1'-sn-glycerol)(out) + H(+)(out) = 1-acyl-sn-glycero-3-phospho-(1'-sn-glycerol)(in) + H(+)(in). It carries out the reaction 1-(9Z-octadecenoyl)-sn-glycero-3-phospho-(1'-sn-glycerol)(out) + H(+)(out) = 1-(9Z-octadecenoyl)-sn-glycero-3-phospho-(1'-sn-glycerol)(in) + H(+)(in). The enzyme catalyses a 1-O-(1Z-alkenyl)-sn-glycero-3-phosphocholine(out) + H(+)(out) = a 1-O-(1Z-alkenyl)-sn-glycero-3-phosphocholine(in) + H(+)(in). The catalysed reaction is 1-(1Z-hexadecenyl)-sn-glycero-3-phosphocholine(out) + H(+)(out) = 1-(1Z-hexadecenyl)-sn-glycero-3-phosphocholine(in) + H(+)(in). It catalyses the reaction a 1-O-(1Z-alkenyl)-sn-glycero-3-phosphoethanolamine(out) + H(+)(out) = a 1-O-(1Z-alkenyl)-sn-glycero-3-phosphoethanolamine(in) + H(+)(in). It carries out the reaction 1-O-(1Z-hexadecenyl)-sn-glycero-3-phosphoethanolamine(out) + H(+)(out) = 1-O-(1Z-hexadecenyl)-sn-glycero-3-phosphoethanolamine(in) + H(+)(in). Its function is as follows. Plays a critical role in the phospholipid salvage pathway from lysosomes to the cytosol. Mediates the rate-limiting, proton-dependent, lysosomal efflux of lysophospholipids, which can then be reacylated by acyltransferases in the endoplasmic reticulum to form phospholipids. Selective for zwitterionic headgroups such as lysophosphatidylcholine (LPC) and lysophosphatidylethanolamine (LPE), can also transport lysophosphatidylglycerol (LPG), but not other anionic lysophospholipids, sphingosine, nor sphingomyelin. Transports lysophospholipids with saturated, monounsaturated, and polyunsaturated fatty acids, such as 1-hexadecanoyl-sn-glycero-3-phosphocholine, 1-(9Z-octadecenoyl)-sn-glycero-3-phosphocholine and 1-(4Z,7Z,10Z,13Z,16Z,19Z-docosahexaenoyl)-sn-glycero-3-phosphocholine, respectively. Can also transport lysoplasmalogen (LPC with a fatty alcohol) such as 1-(1Z-hexadecenyl)-sn-glycero-3-phosphocholine. Lysosomal LPC could function as intracellular signaling messenger. Essential player in lysosomal homeostasis. Crucial for cell survival under conditions of nutrient limitation. May be involved in necrotic or autophagic cell death. This is Protein spinster homolog 1 (SPNS1) from Homo sapiens (Human).